A 268-amino-acid chain; its full sequence is MAAIRMGKLTTMPAGLIYASVSVHAAKQEESKKQLVKPEQLPIYTAPPLQSKYVEEQPGHLQMGFASIRTATGCYIGWCKGVYVFVKNGIMDTVQFGKDAYVYLKNPPRDFLPKMGVITVSGLAGLVSARKGSKFKKITYPLGLATLGATVCYPVQSVIIAKVTAKKVYATSQQIFGAVKSLWTKSSKEESLPKPKEKTKLGSSSEIEVPAKTTHVLKHSVPLPTELSSEAKTKSESTSGATQFMPDPKLMDHGQSHPEDIDMYSTRS.

The N-terminal 27 residues, 1–27 (MAAIRMGKLTTMPAGLIYASVSVHAAK), are a transit peptide targeting the mitochondrion. The Mitochondrial intermembrane portion of the chain corresponds to 28–110 (QEESKKQLVK…YVYLKNPPRD (83 aa)). The chain crosses the membrane as a helical span at residues 111–129 (FLPKMGVITVSGLAGLVSA). Topologically, residues 130-137 (RKGSKFKK) are mitochondrial matrix. The helical transmembrane segment at 138–155 (ITYPLGLATLGATVCYPV) threads the bilayer. Topologically, residues 156–268 (QSVIIAKVTA…EDIDMYSTRS (113 aa)) are mitochondrial intermembrane. The segment covering 187-200 (SKEESLPKPKEKTK) has biased composition (basic and acidic residues). A disordered region spans residues 187–268 (SKEESLPKPK…EDIDMYSTRS (82 aa)). Phosphoserine is present on S204. Over residues 249–260 (KLMDHGQSHPED) the composition is skewed to basic and acidic residues.

Belongs to the apolipoprotein O/MICOS complex subunit Mic27 family. In terms of assembly, component of the mitochondrial contact site and cristae organizing system (MICOS) complex, composed of at least MICOS10/MIC10, CHCHD3/MIC19, CHCHD6/MIC25, APOOL/MIC27, IMMT/MIC60, APOO/MIC23/MIC26 and MICOS13/MIC13. This complex was also known under the names MINOS or MitOS complex. The MICOS complex associates with mitochondrial outer membrane proteins SAMM50, MTX1 and MTX2 (together described as components of the mitochondrial outer membrane sorting assembly machinery (SAM) complex) and DNAJC11, mitochondrial inner membrane protein TMEM11 and with HSPA9. The MICOS and SAM complexes together with DNAJC11 are part of a large protein complex spanning both membranes termed the mitochondrial intermembrane space bridging (MIB) complex. Interacts with MICOS10/MIC10, IMMT/MIC60 and APOO/MIC23/MIC26.

The protein localises to the mitochondrion inner membrane. It is found in the mitochondrion. Its function is as follows. Component of the MICOS complex, a large protein complex of the mitochondrial inner membrane that plays crucial roles in the maintenance of crista junctions, inner membrane architecture, and formation of contact sites to the outer membrane. Specifically binds to cardiolipin (in vitro) but not to the precursor lipid phosphatidylglycerol. Plays a crucial role in crista junction formation and mitochondrial function,. The chain is MICOS complex subunit MIC27 (APOOL) from Homo sapiens (Human).